The primary structure comprises 202 residues: Shikimate kinase (202 aa).

20 to 25 (GSGKST) is an ATP binding site. Ser-24 serves as a coordination point for Mg(2+). Substrate is bound by residues Asp-42, Arg-66, and Gly-88. Arg-126 lines the ATP pocket. Arg-153 provides a ligand contact to substrate.

It belongs to the shikimate kinase family. Monomer. Requires Mg(2+) as cofactor.

The protein resides in the cytoplasm. The catalysed reaction is shikimate + ATP = 3-phosphoshikimate + ADP + H(+). It participates in metabolic intermediate biosynthesis; chorismate biosynthesis; chorismate from D-erythrose 4-phosphate and phosphoenolpyruvate: step 5/7. Catalyzes the specific phosphorylation of the 3-hydroxyl group of shikimic acid using ATP as a cosubstrate. This Chlorobium luteolum (strain DSM 273 / BCRC 81028 / 2530) (Pelodictyon luteolum) protein is Shikimate kinase.